A 1249-amino-acid polypeptide reads, in one-letter code: ATP-dependent helicase/nuclease subunit A (1249 aa).

Residues 5–482 (TNYTPSQQAV…IVLAENFRSV (478 aa)) enclose the UvrD-like helicase ATP-binding domain. Position 26–33 (26–33 (ASAGSGKT)) interacts with ATP. The region spanning 521–811 (ADMPQTTNLL…NVMTIHGSKG (291 aa)) is the UvrD-like helicase C-terminal domain.

Belongs to the helicase family. AddA subfamily. In terms of assembly, heterodimer of AddA and AddB/RexB. Mg(2+) serves as cofactor.

It catalyses the reaction Couples ATP hydrolysis with the unwinding of duplex DNA by translocating in the 3'-5' direction.. The catalysed reaction is ATP + H2O = ADP + phosphate + H(+). The heterodimer acts as both an ATP-dependent DNA helicase and an ATP-dependent, dual-direction single-stranded exonuclease. Recognizes the chi site generating a DNA molecule suitable for the initiation of homologous recombination. The AddA nuclease domain is required for chi fragment generation; this subunit has the helicase and 3' -&gt; 5' nuclease activities. This Lactiplantibacillus plantarum (strain ATCC BAA-793 / NCIMB 8826 / WCFS1) (Lactobacillus plantarum) protein is ATP-dependent helicase/nuclease subunit A.